Here is a 225-residue protein sequence, read N- to C-terminus: Lipoprotein CseA (225 aa).

The N-terminal stretch at 1–36 (MRGLTDGRTPRGTRRTTQAASTAVAVFVALGVSLAG) is a signal peptide. Cysteine 37 carries the N-palmitoyl cysteine lipid modification. Cysteine 37 carries the S-diacylglycerol cysteine lipid modification. 2 disordered regions span residues 40–77 (GGTG…APDR) and 205–225 (THND…EPDS). Residues 60–73 (SASPAPAAKASPSK) are compositionally biased toward low complexity.

The protein localises to the cell membrane. May be involved in the stabilization of the cell envelope or may interact with the sensor protein CseC to modulate its activity, in response to cell envelope stress. The polypeptide is Lipoprotein CseA (cseA) (Streptomyces coelicolor (strain ATCC BAA-471 / A3(2) / M145)).